A 273-amino-acid chain; its full sequence is tRNA (guanine-N(7)-)-methyltransferase A (273 aa).

Gly-86, Glu-109, Arg-111, Asn-142, Ala-143, and Leu-162 together coordinate S-adenosyl-L-methionine. Asp-165 is a catalytic residue. The alphaC helix stretch occupies residues 166–174; that stretch reads PHFKKTKHK. Residues Thr-240 and Glu-242 each contribute to the S-adenosyl-L-methionine site. Residues 240-248 form an alpha6 helix region; that stretch reads TEEGKKVQR.

It belongs to the class I-like SAM-binding methyltransferase superfamily. TrmB family. Catalytic component of the METTL1-WDR4 complex, composed of mettl1 and wdr4.

The protein localises to the nucleus. It carries out the reaction guanosine(46) in tRNA + S-adenosyl-L-methionine = N(7)-methylguanosine(46) in tRNA + S-adenosyl-L-homocysteine. The catalysed reaction is a guanosine in mRNA + S-adenosyl-L-methionine = an N(7)-methylguanosine in mRNA + S-adenosyl-L-homocysteine. It catalyses the reaction a guanosine in miRNA + S-adenosyl-L-methionine = an N(7)-methylguanosine in miRNA + S-adenosyl-L-homocysteine. Its pathway is tRNA modification; N(7)-methylguanine-tRNA biosynthesis. Functionally, catalytic component of METTL1-WDR4 methyltransferase complex that mediates the formation of N(7)-methylguanine in a subset of RNA species, such as tRNAs, mRNAs and microRNAs (miRNAs). Catalyzes the formation of N(7)-methylguanine at position 46 (m7G46) in a large subset of tRNAs that contain the 5'-RAGGU-3' motif within the variable loop. M7G46 interacts with C13-G22 in the D-loop to stabilize tRNA tertiary structure and protect tRNAs from decay. Also acts as a methyltransferase for a subset of internal N(7)-methylguanine in mRNAs. Internal N(7)-methylguanine methylation of mRNAs in response to stress promotes their relocalization to stress granules, thereby suppressing their translation. Also methylates a specific subset of miRNAs. This chain is tRNA (guanine-N(7)-)-methyltransferase A (mettl1-A), found in Xenopus tropicalis (Western clawed frog).